Reading from the N-terminus, the 245-residue chain is tRNA pseudouridine synthase A (245 aa).

The Nucleophile role is filled by Asp-52. Residue Tyr-112 coordinates substrate.

Belongs to the tRNA pseudouridine synthase TruA family. Homodimer.

The enzyme catalyses uridine(38/39/40) in tRNA = pseudouridine(38/39/40) in tRNA. Formation of pseudouridine at positions 38, 39 and 40 in the anticodon stem and loop of transfer RNAs. This Dictyoglomus turgidum (strain DSM 6724 / Z-1310) protein is tRNA pseudouridine synthase A.